A 310-amino-acid polypeptide reads, in one-letter code: Glutaminase (310 aa).

Residues Ser-66, Asn-117, Glu-161, Asn-168, Tyr-192, Tyr-244, and Val-262 each contribute to the substrate site.

Belongs to the glutaminase family. As to quaternary structure, homotetramer.

The enzyme catalyses L-glutamine + H2O = L-glutamate + NH4(+). This Desulfovibrio desulfuricans (strain ATCC 27774 / DSM 6949 / MB) protein is Glutaminase.